Here is a 426-residue protein sequence, read N- to C-terminus: Enolase 1 (426 aa).

Q163 is a (2R)-2-phosphoglycerate binding site. E205 (proton donor) is an active-site residue. Residues D242, E283, and D310 each coordinate Mg(2+). Positions 335, 364, 365, and 386 each coordinate (2R)-2-phosphoglycerate. K335 functions as the Proton acceptor in the catalytic mechanism.

This sequence belongs to the enolase family. The cofactor is Mg(2+).

It localises to the cytoplasm. The protein resides in the secreted. The protein localises to the cell surface. It catalyses the reaction (2R)-2-phosphoglycerate = phosphoenolpyruvate + H2O. The protein operates within carbohydrate degradation; glycolysis; pyruvate from D-glyceraldehyde 3-phosphate: step 4/5. Its function is as follows. Catalyzes the reversible conversion of 2-phosphoglycerate (2-PG) into phosphoenolpyruvate (PEP). It is essential for the degradation of carbohydrates via glycolysis. In Streptomyces coelicolor (strain ATCC BAA-471 / A3(2) / M145), this protein is Enolase 1.